A 454-amino-acid polypeptide reads, in one-letter code: Bifunctional protein GlmU (454 aa).

The segment at 1–226 (MALNVVILAA…AVEVEGANNR (226 aa)) is pyrophosphorylase. Residues 8-11 (LAAG), lysine 22, glutamine 73, 78-79 (GT), 100-102 (YGD), glycine 137, glutamate 151, asparagine 166, and asparagine 224 contribute to the UDP-N-acetyl-alpha-D-glucosamine site. Aspartate 102 is a binding site for Mg(2+). Residue asparagine 224 coordinates Mg(2+). Residues 227-247 (VQLAQLERAYQARAAEKLMLE) form a linker region. Residues 248 to 454 (GANLRDPARI…GWPRPVKLKK (207 aa)) form an N-acetyltransferase region. Residues arginine 330 and lysine 348 each contribute to the UDP-N-acetyl-alpha-D-glucosamine site. The Proton acceptor role is filled by histidine 360. Residues tyrosine 363 and asparagine 374 each contribute to the UDP-N-acetyl-alpha-D-glucosamine site. Acetyl-CoA contacts are provided by residues alanine 377, 383–384 (NY), serine 402, alanine 420, and arginine 437.

It in the N-terminal section; belongs to the N-acetylglucosamine-1-phosphate uridyltransferase family. The protein in the C-terminal section; belongs to the transferase hexapeptide repeat family. In terms of assembly, homotrimer. It depends on Mg(2+) as a cofactor.

The protein resides in the cytoplasm. The enzyme catalyses alpha-D-glucosamine 1-phosphate + acetyl-CoA = N-acetyl-alpha-D-glucosamine 1-phosphate + CoA + H(+). The catalysed reaction is N-acetyl-alpha-D-glucosamine 1-phosphate + UTP + H(+) = UDP-N-acetyl-alpha-D-glucosamine + diphosphate. It participates in nucleotide-sugar biosynthesis; UDP-N-acetyl-alpha-D-glucosamine biosynthesis; N-acetyl-alpha-D-glucosamine 1-phosphate from alpha-D-glucosamine 6-phosphate (route II): step 2/2. Its pathway is nucleotide-sugar biosynthesis; UDP-N-acetyl-alpha-D-glucosamine biosynthesis; UDP-N-acetyl-alpha-D-glucosamine from N-acetyl-alpha-D-glucosamine 1-phosphate: step 1/1. It functions in the pathway bacterial outer membrane biogenesis; LPS lipid A biosynthesis. Its function is as follows. Catalyzes the last two sequential reactions in the de novo biosynthetic pathway for UDP-N-acetylglucosamine (UDP-GlcNAc). The C-terminal domain catalyzes the transfer of acetyl group from acetyl coenzyme A to glucosamine-1-phosphate (GlcN-1-P) to produce N-acetylglucosamine-1-phosphate (GlcNAc-1-P), which is converted into UDP-GlcNAc by the transfer of uridine 5-monophosphate (from uridine 5-triphosphate), a reaction catalyzed by the N-terminal domain. In Shewanella pealeana (strain ATCC 700345 / ANG-SQ1), this protein is Bifunctional protein GlmU.